The primary structure comprises 265 residues: MRVLALSAVFLVASIIGMPAVAKEWQENKSWNAHFTEHKSQGVVVLWNENKQQGFTNNLKRANQAFLPASTFKIPNSLIALDLGVVKDEHQVFKWDGQTRDIATWNRDHNLITAMKYSVVPVYQEFARQIGEARMSKMLHAFDYGNEDISGNVDSFWLDGGIRISATEQISFLRKLYHNKLHVSERSQRIVKQAMLTEANGDYIIRAKTGYSTRIEPKIGWWVGWVELDDNVWFFAMNMDMPTSDGLGLRQAITKEVLKQEKIIP.

Positions 1–22 (MRVLALSAVFLVASIIGMPAVA) are cleaved as a signal peptide. Catalysis depends on serine 70, which acts as the Acyl-ester intermediate. Residues serine 70, lysine 73, serine 118, and arginine 250 each coordinate a beta-lactam. The residue at position 73 (lysine 73) is an N6-carboxylysine.

This sequence belongs to the class-D beta-lactamase family. Monomer. Dimer. Carboxylated on the epsilon-amino group of a lysine, with the resulting carbamate functional group serving as a general base. Probably N-carboxylated at Lys-73 at neutral pH in vivo and undergoes complete N-decarboxylation, at pH 4.1, in vitro.

The enzyme catalyses a beta-lactam + H2O = a substituted beta-amino acid. With respect to regulation, inhibited by avibactam, related diazabicyclooctane (DBO) derivatives and by bicyclic boronic acids, via a covalent binding to Ser-70. Inhibited by chloride, bromide and iodide ions. Not inhibited by the beta-lactamase-blocking agents, clavulanic acid or tazobactam. Class D beta-lactamase which confers resistance to the beta-lactam antibiotics, including amoxicillin, and moderate resistance to cephalosporins and carbapenems such as cephalothin and imipenem; in the DH10B strain of E.coli. Acts via hydrolysis of the beta-lactam ring. Has oxacillin-, cephalothin- and imipenem-hydrolyzing activities. In Klebsiella pneumoniae, this protein is Beta-lactamase OXA-48.